The following is a 429-amino-acid chain: Acetyltransferase pyr8 (429 aa).

The next 9 membrane-spanning stretches (helical) occupy residues 12 to 32 (IAQELALYLAFTVPTAFVIIT), 39 to 56 (LRLAWTPCLLYILYRFSL), 69 to 89 (GVAAGQATVAALQCLNLLLIT), 154 to 174 (YVLRESAIIIWQYLLLDLIHM), 221 to 241 (VCLNIVSRIYCLVLVVLRISA), 300 to 320 (IFFTFFTSAVLHLACDAILGI), 324 to 344 (GSGAMPFFCVVPLAIMFEDGV), 365 to 385 (LVGFLWVGSWMYATSPWYLYP), and 409 to 429 (VAQKVLLVYGVVLYWAIGGEI).

This sequence belongs to the wax synthase family.

It localises to the membrane. Its pathway is secondary metabolite biosynthesis; terpenoid biosynthesis. In terms of biological role, acetyltransferase; part of the gene cluster that mediates the biosynthesis of pyripyropene A, a specific human acyl-coenzyme A:cholesterol acyltransferase 2 inhibitor. The first step of the pathway is the synthesis of nicotinyl-CoA from nicotinic acid by the nicotinic acid-CoA ligase pyr1. Nicotinyl-CoA is then a substrate of polyketide synthase pyr2 to produce 4-hydroxy-6-(3-pyridinyl)-2H-pyran-2-one (HPPO) which is further prenylated by the polyprenyl transferase pyr6 to yield farnesyl-HPPO. The next steps consist of an epoxidation of farnesyl-HPPO to epoxyfarnesyl-HPPO by FAD-dependent monooxygenase pyr5 and a cyclization of the terpenoid portion by the terpene cyclase pyr4 to yield deacetyl-pyripyropene E. The 2 cytochrome P450 monooxygenases pyr3 and pyr9, and the 2 acetyltransferases pyr7 and pyr8 are involved in the conversion of deacetyl-pyripyropene E into pyripyropene A through several cycles of oxidation and acetylation steps. Pyr7 acetylates deacetyl-pyripyropene E to pyripyropene E which is oxidized to 11-deacetyl-pyripyropene O by pyr3, which is in turn acetylated into pyripyropene O by pyr8. Pyripyropene O is then oxidized to deacetyl-pyripyropene A by pyr9. Deacetyl-pyripyropene A is finally acetylated to pyripyropene A by pyr8. The sequence is that of Acetyltransferase pyr8 from Aspergillus fumigatus (strain ATCC MYA-4609 / CBS 101355 / FGSC A1100 / Af293) (Neosartorya fumigata).